A 288-amino-acid polypeptide reads, in one-letter code: Male determiner protein Nix (288 aa).

RRM domains are found at residues 19-94 (YCIY…LPLS), 108-179 (IVVY…KVER), and 205-282 (RSIG…FVPE).

In terms of biological role, male determiner protein (M-factor) that controls male somatic sexual differentiation. Acts as a dominant factor that regulates the mRNA splicing of doublesex (dsx) or fruitless (fru) transcripts and promotes expression of male splice forms of dsx and fru. In Aedes aegypti (Yellowfever mosquito), this protein is Male determiner protein Nix.